Reading from the N-terminus, the 489-residue chain is uncharacterized protein (489 aa).

This is an uncharacterized protein from Bacillus subtilis (strain 168).